We begin with the raw amino-acid sequence, 213 residues long: Kynurenine formamidase (213 aa).

Substrate is bound at residue Trp-18. Zn(2+) is bound by residues His-48, His-52, and Asp-54. The active-site Proton donor/acceptor is the His-58. His-160 and Glu-172 together coordinate Zn(2+).

Belongs to the Cyclase 1 superfamily. KynB family. As to quaternary structure, homodimer. Zn(2+) is required as a cofactor.

The enzyme catalyses N-formyl-L-kynurenine + H2O = L-kynurenine + formate + H(+). It participates in amino-acid degradation; L-tryptophan degradation via kynurenine pathway; L-kynurenine from L-tryptophan: step 2/2. Its function is as follows. Catalyzes the hydrolysis of N-formyl-L-kynurenine to L-kynurenine, the second step in the kynurenine pathway of tryptophan degradation. The sequence is that of Kynurenine formamidase from Burkholderia vietnamiensis (strain G4 / LMG 22486) (Burkholderia cepacia (strain R1808)).